Consider the following 955-residue polypeptide: Histone deacetylase 6 (955 aa).

2 histone deacetylase regions span residues 15–337 (TLIG…YAPF) and 425–749 (METL…VLQN). The active-site 1 is H146. H561 acts as the 2 in catalysis. The disordered stretch occupies residues 815–840 (SIDMADQSSSSGSSSSSTRPSHNLEI). The span at 818–831 (MADQSSSSGSSSSS) shows a compositional bias: low complexity. The UBP-type zinc finger occupies 853–951 (ATCPHLKEVK…SAAHESKFGE (99 aa)). Positions 855, 857, 875, 878, 887, 890, and 895 each coordinate Zn(2+). The interval 896-898 (GRF) is ubiquitin binding. Zn(2+)-binding residues include H902, H906, H912, C925, and C928. The ubiquitin binding stretch occupies residues 924–931 (WCYPCDSY).

This sequence belongs to the histone deacetylase family. HD type 2 subfamily. Requires Zn(2+) as cofactor.

It localises to the nucleus. The enzyme catalyses N(6)-acetyl-L-lysyl-[histone] + H2O = L-lysyl-[histone] + acetate. Functionally, probable histone deacetylase. Histone deacetylases are responsible for the deacetylation of lysine residues on the N-terminal part of the core histones (H2A, H2B, H3 and H4). Histone deacetylation gives a tag for epigenetic repression and plays an important role in transcriptional regulation, cell cycle progression and developmental events. Histone deacetylases act via the formation of large multiprotein complexes. The sequence is that of Histone deacetylase 6 (hda-6) from Caenorhabditis elegans.